Reading from the N-terminus, the 368-residue chain is Glutaminyl-peptide cyclotransferase (368 aa).

The signal sequence occupies residues Met1–Ala23. N-linked (GlcNAc...) asparagine glycans are attached at residues Asn53 and Asn65. Cys143 and Cys169 form a disulfide bridge. Zn(2+) is bound at residue Asp164. Glu207 acts as the Proton acceptor in catalysis. Glu208 serves as a coordination point for Zn(2+). Residue Asp254 is the Proton acceptor of the active site. N-linked (GlcNAc...) asparagine glycosylation occurs at Asn292. His336 contacts Zn(2+). N-linked (GlcNAc...) asparagine glycosylation is present at Asn352.

This sequence belongs to the glutaminyl-peptide cyclotransferase family. In terms of tissue distribution, expressed by the venom gland.

It localises to the secreted. The enzyme catalyses N-terminal L-glutaminyl-[peptide] = N-terminal 5-oxo-L-prolyl-[peptide] + NH4(+). Functionally, responsible for the biosynthesis of pyroglutamyl peptides. Has a bias against acidic and tryptophan residues adjacent to the N-terminal glutaminyl residue and a lack of importance of chain length after the second residue. Also catalyzes N-terminal pyroglutamate formation. The sequence is that of Glutaminyl-peptide cyclotransferase (QPCT) from Bothrops jararaca (Jararaca).